Reading from the N-terminus, the 560-residue chain is MAAVVNYSPPWWVNLFHRLPHFNLQFQQTSSDFRPDDSDYQKAVLLLGAAALVCLALDLLFLLFYSFWLCCCRRKNHDSPNADCCCTAWCVIIATLVCSAGIAVGFYGNGETCDGVTRLTYSLRHANQTVAGIDKLVSESTSSLNETLMEGLVQLETVYSKQTDYLSIVQKLQGQLDELINLMLGVPFWSSNDLSLDHLASITEQYDWYRWLGYLGLLLFDVIICLLVLVGLIRNSRSILIGVCFLGVLTLVISWASLGLEFSFAVGASDFCVSPDSYITKVTRENAVINQDILQYYLKCSMGQTNPFQQKLSGSHKALVEMQDDVSELLRSAIRDFPKTKSNLEEMQGVLNSTEVSLHHLTALVDCRSLHMDYVQALTGLCYDGVEGLIYLVLFSFVTALMFSSIVCSVPHTWQSKRSEEEDGDETSATLGSRAPHDNLYRVHMPSLYSCGSSTYGNEASLPAAAHTVSNAPVTEYMSQNANFQTPRCENTPLIGRESPPPSYTSSMRAKYLATSRPDQPRPTESQNGLEPNMRPDLTSRSAPNSRPNSAIHRPHSAIH.

Topologically, residues 1 to 43 are extracellular; it reads MAAVVNYSPPWWVNLFHRLPHFNLQFQQTSSDFRPDDSDYQKA. A helical transmembrane segment spans residues 44-64; it reads VLLLGAAALVCLALDLLFLLF. Over 65-87 the chain is Cytoplasmic; that stretch reads YSFWLCCCRRKNHDSPNADCCCT. The chain crosses the membrane as a helical span at residues 88–108; sequence AWCVIIATLVCSAGIAVGFYG. Over 109–212 the chain is Extracellular; it reads NGETCDGVTR…TEQYDWYRWL (104 aa). Residues Glu-111 and Asp-114 each contribute to the Ca(2+) site. 2 N-linked (GlcNAc...) asparagine glycosylation sites follow: Asn-127 and Asn-145. Residues 213 to 233 traverse the membrane as a helical segment; the sequence is GYLGLLLFDVIICLLVLVGLI. Topologically, residues 234–238 are cytoplasmic; that stretch reads RNSRS. A helical transmembrane segment spans residues 239-259; the sequence is ILIGVCFLGVLTLVISWASLG. Residues 260–387 lie on the Extracellular side of the membrane; it reads LEFSFAVGAS…LTGLCYDGVE (128 aa). 2 disulfides stabilise this stretch: Cys-272–Cys-382 and Cys-300–Cys-367. Residue Asn-352 is glycosylated (N-linked (GlcNAc...) asparagine). The chain crosses the membrane as a helical span at residues 388 to 408; that stretch reads GLIYLVLFSFVTALMFSSIVC. The Cytoplasmic portion of the chain corresponds to 409-560; sequence SVPHTWQSKR…AIHRPHSAIH (152 aa). Disordered regions lie at residues 415–435 and 486–560; these read QSKR…GSRA and TPRC…SAIH. Residues 539–549 are compositionally biased toward polar residues; it reads TSRSAPNSRPN.

Belongs to the tweety family. As to quaternary structure, homotetramer; disulfide-linked. Forms cis-homodimers in the presence of Ca(2+).

It localises to the cell membrane. The catalysed reaction is chloride(in) = chloride(out). It catalyses the reaction L-glutamate(out) = L-glutamate(in). Functionally, may act as a calcium-independent, swelling-dependent volume-regulated anion channel (VRAC-swell) which plays a pivotal role in the process of regulatory volume decrease (RVD) in the brain through the efflux of anions like chloride and organic osmolytes like glutamate. Probable large-conductance Ca(2+)-activated chloride channel. The sequence is that of Protein tweety homolog 3 (ttyh3b) from Danio rerio (Zebrafish).